Consider the following 83-residue polypeptide: Large ribosomal subunit protein bL27c (83 aa).

The segment at 1–24 is disordered; that stretch reads MAHKKGAGSTKNGRDSNAKRLGVK.

Belongs to the bacterial ribosomal protein bL27 family.

It is found in the plastid. The protein localises to the chloroplast. The sequence is that of Large ribosomal subunit protein bL27c (rpl27) from Trieres chinensis (Marine centric diatom).